The following is a 422-amino-acid chain: L-threonine dehydratase biosynthetic IlvA (422 aa).

Lys56 is subject to N6-(pyridoxal phosphate)lysine. Residues Asn83, 189–193 (GGGGL), and Ser315 each bind pyridoxal 5'-phosphate. Residues 339 to 413 (HYFILNFPQR…FDPSNIYINE (75 aa)) form the ACT-like domain.

It belongs to the serine/threonine dehydratase family. As to quaternary structure, homotetramer. Requires pyridoxal 5'-phosphate as cofactor.

It carries out the reaction L-threonine = 2-oxobutanoate + NH4(+). It participates in amino-acid biosynthesis; L-isoleucine biosynthesis; 2-oxobutanoate from L-threonine: step 1/1. Catalyzes the anaerobic formation of alpha-ketobutyrate and ammonia from threonine in a two-step reaction. The first step involved a dehydration of threonine and a production of enamine intermediates (aminocrotonate), which tautomerizes to its imine form (iminobutyrate). Both intermediates are unstable and short-lived. The second step is the nonenzymatic hydrolysis of the enamine/imine intermediates to form 2-ketobutyrate and free ammonia. In the low water environment of the cell, the second step is accelerated by RidA. This chain is L-threonine dehydratase biosynthetic IlvA (ilvA), found in Staphylococcus epidermidis (strain ATCC 12228 / FDA PCI 1200).